A 146-amino-acid polypeptide reads, in one-letter code: UPF0178 protein BCQ_2874 (146 aa).

This sequence belongs to the UPF0178 family.

The polypeptide is UPF0178 protein BCQ_2874 (Bacillus cereus (strain Q1)).